Consider the following 404-residue polypeptide: 8-amino-7-oxononanoate synthase (404 aa).

Arginine 20 is a substrate binding site. 116-117 is a binding site for pyridoxal 5'-phosphate; sequence GY. Histidine 141 is a binding site for substrate. Positions 187, 215, and 243 each coordinate pyridoxal 5'-phosphate. The residue at position 246 (lysine 246) is an N6-(pyridoxal phosphate)lysine. Threonine 366 is a binding site for substrate.

This sequence belongs to the class-II pyridoxal-phosphate-dependent aminotransferase family. BioF subfamily. In terms of assembly, homodimer. Pyridoxal 5'-phosphate is required as a cofactor.

The enzyme catalyses 6-carboxyhexanoyl-[ACP] + L-alanine + H(+) = (8S)-8-amino-7-oxononanoate + holo-[ACP] + CO2. The protein operates within cofactor biosynthesis; biotin biosynthesis. In terms of biological role, catalyzes the decarboxylative condensation of pimeloyl-[acyl-carrier protein] and L-alanine to produce 8-amino-7-oxononanoate (AON), [acyl-carrier protein], and carbon dioxide. This is 8-amino-7-oxononanoate synthase from Cupriavidus taiwanensis (strain DSM 17343 / BCRC 17206 / CCUG 44338 / CIP 107171 / LMG 19424 / R1) (Ralstonia taiwanensis (strain LMG 19424)).